Consider the following 670-residue polypeptide: Acetyl-coenzyme A synthetase (670 aa).

CoA-binding positions include 205-208 and Thr326; that span reads RRGK. ATP contacts are provided by residues 402–404, 426–431, Asp517, Arg532, and Arg543; these read GEP and STWWMT. Val554, His556, and Val559 together coordinate Mg(2+). Position 601 (Arg601) interacts with CoA. Lys626 bears the N6-acetyllysine mark.

It belongs to the ATP-dependent AMP-binding enzyme family. Mg(2+) is required as a cofactor. In terms of processing, acetylated. Deacetylation by the SIR2-homolog deacetylase activates the enzyme.

It catalyses the reaction acetate + ATP + CoA = acetyl-CoA + AMP + diphosphate. In terms of biological role, catalyzes the conversion of acetate into acetyl-CoA (AcCoA), an essential intermediate at the junction of anabolic and catabolic pathways. AcsA undergoes a two-step reaction. In the first half reaction, AcsA combines acetate with ATP to form acetyl-adenylate (AcAMP) intermediate. In the second half reaction, it can then transfer the acetyl group from AcAMP to the sulfhydryl group of CoA, forming the product AcCoA. The protein is Acetyl-coenzyme A synthetase of Pyrobaculum arsenaticum (strain DSM 13514 / JCM 11321 / PZ6).